The following is a 392-amino-acid chain: Immunoglobulin-binding protein EibA (392 aa).

The signal sequence occupies residues 1-27 (MSKKFTKAVLSAAMAGVLFGVSFDIMA). The interval 28-301 (AEQSYSALNA…IAANTRTLQQ (274 aa)) is surface exposed passenger domain. At 28-341 (AEQSYSALNA…GLFQPYSVGK (314 aa)) the chain is on the extracellular side. Positions 174-215 (ESANSTIVANELEAQKGKLDAQKGELEAQKKNLGELTTRTDK) form a coiled coil. Residues 187–230 (AQKGKLDAQKGELEAQKKNLGELTTRTDKIDAAAAATAAKVESR) form a right-handed coiled-coil (RHcc) region. Residues 231-256 (TLVGVSSDGTLTRAEGAKNTISVNDG) form a saddle domain region. The segment at 257-322 (LVALSGRTDR…INENHKEMKR (66 aa)) is left-handed coiled-coil (LHcc). Positions 299 to 341 (LQQHSARLDSQQRQINENHKEMKRAAAQSAALTGLFQPYSVGK) are outer membrane translocation of the passenger domain. 4 beta stranded membrane-spanning segments follow: residues 342–352 (FNASAAVGGYS), 355–366 (QALAVGVGYRFN), 369–378 (TAAKAGVAFS), and 382–392 (ASWNVGVNFEF). The segment at 342–392 (FNASAAVGGYSDEQALAVGVGYRFNEQTAAKAGVAFSDGDASWNVGVNFEF) is translocator domain.

Belongs to the autotransporter-2 (AT-2) (TC 1.B.40) family. Eib subfamily. In terms of assembly, homotrimer; can probably form mixed heterotrimers in vivo. Will form mixed heterotrimers with EibD; these are correctly located in the outer membrane and bind IgG Fc, although less well than homotrimers. Does not form trimers with distantly related YadA from Y.enterocolitica; coexpression was lethal and one of the genes is eliminated in vivo. If the full translocator domain (299-392) is exchanged with that of YadA ('368-455'), will form heterotrimers with YadA and vice-versa. In denaturing gels runs as 2 bands of about 121 and 131 kDa; extracting the sample with 88% phenol at 70 degrees Celsius reduces part of the signal to about 45 kDa. Binds the Fc portion of IgG; binds more than 1 Fc per subunit.

Its subcellular location is the cell surface. The protein resides in the cell outer membrane. Binds (in a non-immune fashion) to the Fc portion of human IgG but not IgA; binding occurs on the cell surface. Confers the ability to survive exposure to human serum exposure. Binds to the Fc portion of human IgG and to whole mouse antibodies also via Fc, binds more than 1 Fc or IgG. The chain is Immunoglobulin-binding protein EibA from Escherichia coli.